The sequence spans 122 residues: HLLQFRKMIKKMTGKEPVISYAFYGCYCGSGGRGKPKDATDRCCFVHDCCYEKVTGCKPKWDDYTYSWKNGDIVCGGDDPCKKEICECDRAAAICFRDNLKTYKKRYMAYPDILCSSKSEKC.

7 cysteine pairs are disulfide-bonded: Cys26–Cys115, Cys28–Cys44, Cys43–Cys95, Cys49–Cys122, Cys50–Cys88, Cys57–Cys81, and Cys75–Cys86. Residues Tyr27, Gly29, and Gly31 each contribute to the Ca(2+) site. Residue His47 is part of the active site. Ca(2+) is bound at residue Asp48. Asp89 is an active-site residue.

Belongs to the phospholipase A2 family. Group II subfamily. D49 sub-subfamily. Homodimer. It depends on Ca(2+) as a cofactor. In terms of tissue distribution, expressed by the venom gland.

The protein resides in the secreted. It carries out the reaction a 1,2-diacyl-sn-glycero-3-phosphocholine + H2O = a 1-acyl-sn-glycero-3-phosphocholine + a fatty acid + H(+). Functionally, snake venom phospholipase A2 (PLA2) that inhibits neuromuscular transmission by blocking acetylcholine release from the nerve termini. PLA2 catalyzes the calcium-dependent hydrolysis of the 2-acyl groups in 3-sn-phosphoglycerides. The protein is Basic phospholipase A2 of Gloydius blomhoffii (Mamushi).